Reading from the N-terminus, the 286-residue chain is Polyamine aminopropyltransferase (286 aa).

The PABS domain occupies 9 to 242 (NGWIDEHHQG…GWWSWTFAAI (234 aa)). Q36 is an S-methyl-5'-thioadenosine binding site. Positions 67 and 91 each coordinate spermidine. S-methyl-5'-thioadenosine-binding positions include E111 and 143–144 (NG). The active-site Proton acceptor is the D162. P169 provides a ligand contact to S-methyl-5'-thioadenosine.

Belongs to the spermidine/spermine synthase family. As to quaternary structure, homodimer or homotetramer.

It is found in the cytoplasm. It catalyses the reaction S-adenosyl 3-(methylsulfanyl)propylamine + putrescine = S-methyl-5'-thioadenosine + spermidine + H(+). It participates in amine and polyamine biosynthesis; spermidine biosynthesis; spermidine from putrescine: step 1/1. Its function is as follows. Catalyzes the irreversible transfer of a propylamine group from the amino donor S-adenosylmethioninamine (decarboxy-AdoMet) to putrescine (1,4-diaminobutane) to yield spermidine. This is Polyamine aminopropyltransferase from Prochlorococcus marinus (strain MIT 9313).